Here is a 410-residue protein sequence, read N- to C-terminus: Trans-splicing factor Raa2, chloroplastic (410 aa).

2 disordered regions span residues 1–40 and 56–106; these read MRTR…QRPA and AADH…QQQV. The transit peptide at 1–46 directs the protein to the chloroplast; sequence MRTRAGAFFGKQRSTSPSGSSTSASRQWLRSSPGRTQRPAAHRVLA. Low complexity predominate over residues 14 to 25; it reads STSPSGSSTSAS. The segment covering 26 to 35 has biased composition (polar residues); the sequence is RQWLRSSPGR. Over residues 96–106 the composition is skewed to low complexity; it reads RQAQRRQQQQV.

The protein belongs to the pseudouridine synthase TruB family. Possibly associated with other factors required for trans-splicing.

Its subcellular location is the plastid. The protein localises to the chloroplast. In terms of biological role, required for trans-splicing of exons 2 and 3 of the chloroplast encoded psaA mRNA (a group II intron). It is not known if this protein has pseudouridine activity; mutation of the potential active site residue does not cause loss of trans-splicing. The chain is Trans-splicing factor Raa2, chloroplastic (RAA2) from Chlamydomonas reinhardtii (Chlamydomonas smithii).